Consider the following 491-residue polypeptide: Glutamyl-tRNA(Gln) amidotransferase subunit A (491 aa).

Residues Lys-76 and Ser-154 each act as charge relay system in the active site. The active-site Acyl-ester intermediate is Ser-178.

This sequence belongs to the amidase family. GatA subfamily. In terms of assembly, heterotrimer of A, B and C subunits.

It carries out the reaction L-glutamyl-tRNA(Gln) + L-glutamine + ATP + H2O = L-glutaminyl-tRNA(Gln) + L-glutamate + ADP + phosphate + H(+). In terms of biological role, allows the formation of correctly charged Gln-tRNA(Gln) through the transamidation of misacylated Glu-tRNA(Gln) in organisms which lack glutaminyl-tRNA synthetase. The reaction takes place in the presence of glutamine and ATP through an activated gamma-phospho-Glu-tRNA(Gln). The chain is Glutamyl-tRNA(Gln) amidotransferase subunit A from Cereibacter sphaeroides (strain ATCC 17029 / ATH 2.4.9) (Rhodobacter sphaeroides).